Reading from the N-terminus, the 334-residue chain is S-adenosylmethionine decarboxylase proenzyme (334 aa).

A substrate-binding site is contributed by F7. Active-site residues include E8 and E11. Substrate is bound at residue E67. The active-site Schiff-base intermediate with substrate; via pyruvic acid is the S68. At S68 the chain carries Pyruvic acid (Ser); by autocatalysis. C82 serves as the catalytic Proton donor; for catalytic activity. F223 is a binding site for substrate. Active-site proton acceptor; for processing activity residues include S229 and H243. Residue E247 coordinates substrate. A Phosphoserine modification is found at S298.

This sequence belongs to the eukaryotic AdoMetDC family. In terms of assembly, heterotetramer of two alpha and two beta chains. It depends on pyruvate as a cofactor. Is synthesized initially as an inactive proenzyme. Formation of the active enzyme involves a self-maturation process in which the active site pyruvoyl group is generated from an internal serine residue via an autocatalytic post-translational modification. Two non-identical subunits are generated from the proenzyme in this reaction, and the pyruvate is formed at the N-terminus of the alpha chain, which is derived from the carboxyl end of the proenzyme. The post-translation cleavage follows an unusual pathway, termed non-hydrolytic serinolysis, in which the side chain hydroxyl group of the serine supplies its oxygen atom to form the C-terminus of the beta chain, while the remainder of the serine residue undergoes an oxidative deamination to produce ammonia and the pyruvoyl group blocking the N-terminus of the alpha chain.

It catalyses the reaction S-adenosyl-L-methionine + H(+) = S-adenosyl 3-(methylsulfanyl)propylamine + CO2. It functions in the pathway amine and polyamine biosynthesis; S-adenosylmethioninamine biosynthesis; S-adenosylmethioninamine from S-adenosyl-L-methionine: step 1/1. Functionally, essential for biosynthesis of the polyamines spermidine and spermine. Promotes maintenance and self-renewal of embryonic stem cells, by maintaining spermine levels. The polypeptide is S-adenosylmethionine decarboxylase proenzyme (AMD1) (Mesocricetus auratus (Golden hamster)).